Here is a 208-residue protein sequence, read N- to C-terminus: Glycerol-3-phosphate acyltransferase 1 (208 aa).

5 helical membrane-spanning segments follow: residues 52 to 72, 77 to 97, 112 to 132, 140 to 160, and 161 to 181; these read VVLM…YLLI, WVIL…WLDF, FLLP…LVFI, IALA…YGSH, and SEFA…KFVL.

The protein belongs to the PlsY family. As to quaternary structure, probably interacts with PlsX.

It localises to the cell membrane. It catalyses the reaction an acyl phosphate + sn-glycerol 3-phosphate = a 1-acyl-sn-glycero-3-phosphate + phosphate. It participates in lipid metabolism; phospholipid metabolism. In terms of biological role, catalyzes the transfer of an acyl group from acyl-phosphate (acyl-PO(4)) to glycerol-3-phosphate (G3P) to form lysophosphatidic acid (LPA). This enzyme utilizes acyl-phosphate as fatty acyl donor, but not acyl-CoA or acyl-ACP. The chain is Glycerol-3-phosphate acyltransferase 1 from Dehalococcoides mccartyi (strain ATCC BAA-2266 / KCTC 15142 / 195) (Dehalococcoides ethenogenes (strain 195)).